A 316-amino-acid chain; its full sequence is Rhomboid-related protein 4 (316 aa).

At 1 to 21 (MQRRTRGIDTGLLLLLSQVFH) the chain is on the cytoplasmic side. The helical transmembrane segment at 22–42 (IGINNIPPVTLATLAVNVWFF) threads the bilayer. Residues 43 to 103 (LNPWKPLYHS…KLEKRLGSRW (61 aa)) are Extracellular-facing. Residues 104-124 (FAYIIATFSLLTGVVYLLLQF) form a helical membrane-spanning segment. The Cytoplasmic segment spans residues 125–137 (ASAELMNQPDFKR). The chain crosses the membrane as a helical span at residues 138 to 154 (NCAVGFSGVLFALKVLS). Residue Ser-144 is the Nucleophile of the active site. The Extracellular portion of the chain corresponds to 155–182 (NHYCPGGFVNILGFPVPNRFACWAELAA). The helical transmembrane segment at 183–203 (IHFCTPGTSFAGHLAGILVGL) threads the bilayer. His-195 is a catalytic residue. Topologically, residues 204-316 (MYTQGPLKKI…RQRLHRFDGQ (113 aa)) are cytoplasmic. The ubiquitin-binding domain (UBD) stretch occupies residues 269 to 284 (SEEEQLERALRASIWD). The VCP/p97-interacting motif (VIM) stretch occupies residues 301 to 316 (PEEEMRRQRLHRFDGQ).

This sequence belongs to the peptidase S54 family. In terms of assembly, interacts with BIK and STEAP3. Interacts (via C-terminal domain) with VCP. Interacts with ubiquitin and ubiquitinated proteins. As to expression, expressed in intestine, lung, brain, kidney, epididymis and testis.

The protein localises to the endoplasmic reticulum membrane. Its subcellular location is the mitochondrion membrane. It carries out the reaction Cleaves type-1 transmembrane domains using a catalytic dyad composed of serine and histidine that are contributed by different transmembrane domains.. Inhibited by aprotinin. Its function is as follows. Intramembrane-cleaving serine protease that cleaves single transmembrane or multi-pass membrane proteins in the hydrophobic plane of the membrane, luminal loops and juxtamembrane regions. Involved in regulated intramembrane proteolysis and the subsequent release of functional polypeptides from their membrane anchors. Functional component of endoplasmic reticulum-associated degradation (ERAD) for misfolded membrane proteins. Required for the degradation process of some specific misfolded endoplasmic reticulum (ER) luminal proteins. Participates in the transfer of misfolded proteins from the ER to the cytosol, where they are destroyed by the proteasome in a ubiquitin-dependent manner. Functions in BIK, MPZ, PKD1, PTCRA, RHO, STEAP3 and TRAC processing. Involved in the regulation of exosomal secretion; inhibits the TSAP6-mediated secretion pathway. Involved in the regulation of apoptosis; modulates BIK-mediated apoptotic activity. Also plays a role in the regulation of spermatogenesis; inhibits apoptotic activity in spermatogonia. This Rattus norvegicus (Rat) protein is Rhomboid-related protein 4 (Rhbdd1).